The primary structure comprises 336 residues: Casein kinase I isoform beta (336 aa).

The Protein kinase domain maps to 17–285 (YKLVREIGFG…YLRQLFRLLF (269 aa)). Residues 23-31 (IGFGSFGHV) and lysine 46 each bind ATP. Aspartate 136 serves as the catalytic Proton acceptor. Over residues 309-320 (ASSSSGEGQQAQ) the composition is skewed to low complexity. A disordered region spans residues 309–336 (ASSSSGEGQQAQTPTGKSDNTKSEMKHS). The segment covering 327 to 336 (DNTKSEMKHS) has biased composition (basic and acidic residues).

The protein belongs to the protein kinase superfamily. CK1 Ser/Thr protein kinase family. Casein kinase I subfamily. Monomer.

The protein localises to the cytoplasm. It carries out the reaction L-seryl-[protein] + ATP = O-phospho-L-seryl-[protein] + ADP + H(+). It catalyses the reaction L-threonyl-[protein] + ATP = O-phospho-L-threonyl-[protein] + ADP + H(+). Its function is as follows. Casein kinases are operationally defined by their preferential utilization of acidic proteins such as caseins as substrates. It can phosphorylate a large number of proteins. Participates in Wnt signaling. The protein is Casein kinase I isoform beta (CSNK1B) of Bos taurus (Bovine).